The following is a 431-amino-acid chain: Ornithine decarboxylase (431 aa).

K94 is modified (N6-(pyridoxal phosphate)lysine). Residues S226, G264, and 297–300 (EPGR) each bind pyridoxal 5'-phosphate. Position 340 to 341 (340 to 341 (YD)) interacts with substrate. The active-site Proton donor; shared with dimeric partner is C376. D377 contributes to the substrate binding site. Y405 is a binding site for pyridoxal 5'-phosphate.

It belongs to the Orn/Lys/Arg decarboxylase class-II family. As to quaternary structure, homodimer. Only the dimer is catalytically active, as the active sites are constructed of residues from both monomers. Requires pyridoxal 5'-phosphate as cofactor.

The enzyme catalyses L-ornithine + H(+) = putrescine + CO2. It functions in the pathway amine and polyamine biosynthesis; putrescine biosynthesis via L-ornithine pathway; putrescine from L-ornithine: step 1/1. With respect to regulation, inhibited by antizyme (AZ) in response to polyamine levels. AZ inhibits the assembly of the functional homodimer by binding to ODC monomers and targeting them for ubiquitin-independent proteolytic destruction by the 26S proteasome. Functionally, catalyzes the first and rate-limiting step of polyamine biosynthesis that converts ornithine into putrescine, which is the precursor for the polyamines, spermidine and spermine. Polyamines are essential for cell proliferation and are implicated in cellular processes, ranging from DNA replication to apoptosis. In Datura stramonium (Jimsonweed), this protein is Ornithine decarboxylase.